The sequence spans 561 residues: Arginine--tRNA ligase (561 aa).

A 'HIGH' region motif is present at residues 128 to 138 (ANPTGPLHVGH).

Belongs to the class-I aminoacyl-tRNA synthetase family. Monomer.

It localises to the cytoplasm. It catalyses the reaction tRNA(Arg) + L-arginine + ATP = L-arginyl-tRNA(Arg) + AMP + diphosphate. The chain is Arginine--tRNA ligase from Chromohalobacter salexigens (strain ATCC BAA-138 / DSM 3043 / CIP 106854 / NCIMB 13768 / 1H11).